A 383-amino-acid chain; its full sequence is Putative F-box protein At4g09190 (383 aa).

One can recognise an F-box domain in the interval 16-67 (RSQREHIPLDLIVEIVSSLPAKSIVRFRSVSKLWSSIITTPDFTSSVVTRSL).

In Arabidopsis thaliana (Mouse-ear cress), this protein is Putative F-box protein At4g09190.